A 378-amino-acid polypeptide reads, in one-letter code: MSHLDNGFRSLNLKRFPETDDVNPLQAWEAADEYLLQQLDDTEISGPVLVLNDVFGALACALAEHTPYSIGDSYLSELATRENLRHNEIAESSVKFLDSTAEYPQAPGVVLIKIPKTLALLEQQLRALRLVVTPQTRIIAGAKARDIHNSTLELFEKILGTTTTTLAWKKARLINCTFTEPALVDAQQMLSWKLEGTDWTIHNHANVFSRTGLDIGARFFLEHLPGNLEGEIVDLGCGNGVVGLTLLEKNPEASVLFTDESPMAVASSRLNVETNMPEALDRCEFMINNALSGVEPFRFNAVLCNPPFHQQHALTDNVAWEMFHHARRCLKINGELYIVANRHLDYFHKLKKIFGNCTTIATNNKFVVLKAVKLGRTR.

The protein belongs to the methyltransferase superfamily. RlmG family.

The protein resides in the cytoplasm. The catalysed reaction is guanosine(1835) in 23S rRNA + S-adenosyl-L-methionine = N(2)-methylguanosine(1835) in 23S rRNA + S-adenosyl-L-homocysteine + H(+). Its function is as follows. Specifically methylates the guanine in position 1835 (m2G1835) of 23S rRNA. In Enterobacter sp. (strain 638), this protein is Ribosomal RNA large subunit methyltransferase G.